Here is a 366-residue protein sequence, read N- to C-terminus: Phospho-N-acetylmuramoyl-pentapeptide-transferase (366 aa).

10 helical membrane-spanning segments follow: residues 27–47, 71–91, 93–113, 134–154, 174–194, 205–225, 245–265, 268–288, 297–317, and 343–363; these read AALF…ISSL, TPTM…LLWA, LSSI…AIGF, LGIE…AAQS, LMLN…VGAG, GLAI…AYLA, LAVI…FNAP, AIFM…TVAV, VIIG…VFWF, and QVVI…LSTL.

It belongs to the glycosyltransferase 4 family. MraY subfamily. Mg(2+) is required as a cofactor.

It is found in the cell inner membrane. The enzyme catalyses UDP-N-acetyl-alpha-D-muramoyl-L-alanyl-gamma-D-glutamyl-meso-2,6-diaminopimeloyl-D-alanyl-D-alanine + di-trans,octa-cis-undecaprenyl phosphate = di-trans,octa-cis-undecaprenyl diphospho-N-acetyl-alpha-D-muramoyl-L-alanyl-D-glutamyl-meso-2,6-diaminopimeloyl-D-alanyl-D-alanine + UMP. The protein operates within cell wall biogenesis; peptidoglycan biosynthesis. Functionally, catalyzes the initial step of the lipid cycle reactions in the biosynthesis of the cell wall peptidoglycan: transfers peptidoglycan precursor phospho-MurNAc-pentapeptide from UDP-MurNAc-pentapeptide onto the lipid carrier undecaprenyl phosphate, yielding undecaprenyl-pyrophosphoryl-MurNAc-pentapeptide, known as lipid I. This chain is Phospho-N-acetylmuramoyl-pentapeptide-transferase, found in Sinorhizobium fredii (strain NBRC 101917 / NGR234).